The chain runs to 282 residues: Pantothenate synthetase (282 aa).

30-37 provides a ligand contact to ATP; the sequence is MGALHAGH. H37 functions as the Proton donor in the catalytic mechanism. Position 61 (Q61) interacts with (R)-pantoate. Q61 contacts beta-alanine. 147–150 is an ATP binding site; that stretch reads GEKD. Q153 lines the (R)-pantoate pocket. ATP is bound by residues V177 and 185 to 188; that span reads LSSR.

It belongs to the pantothenate synthetase family. In terms of assembly, homodimer.

It is found in the cytoplasm. The enzyme catalyses (R)-pantoate + beta-alanine + ATP = (R)-pantothenate + AMP + diphosphate + H(+). Its pathway is cofactor biosynthesis; (R)-pantothenate biosynthesis; (R)-pantothenate from (R)-pantoate and beta-alanine: step 1/1. Catalyzes the condensation of pantoate with beta-alanine in an ATP-dependent reaction via a pantoyl-adenylate intermediate. This Phocaeicola vulgatus (strain ATCC 8482 / DSM 1447 / JCM 5826 / CCUG 4940 / NBRC 14291 / NCTC 11154) (Bacteroides vulgatus) protein is Pantothenate synthetase.